We begin with the raw amino-acid sequence, 273 residues long: Exosome complex component Rrp42 (273 aa).

Belongs to the RNase PH family. Rrp42 subfamily. As to quaternary structure, component of the archaeal exosome complex. Forms a hexameric ring-like arrangement composed of 3 Rrp41-Rrp42 heterodimers. The hexameric ring associates with a trimer of Rrp4 and/or Csl4 subunits.

The protein resides in the cytoplasm. Non-catalytic component of the exosome, which is a complex involved in RNA degradation. Contributes to the structuring of the Rrp41 active site. The chain is Exosome complex component Rrp42 from Thermococcus gammatolerans (strain DSM 15229 / JCM 11827 / EJ3).